We begin with the raw amino-acid sequence, 1080 residues long: Carbamoyl phosphate synthase large chain (1080 aa).

The segment at 1–403 (MPKRTDLETI…SLQKALRGLE (403 aa)) is carboxyphosphate synthetic domain. Arg129, Arg169, Gly175, Gly176, Glu208, Val210, Glu215, Gly241, Val242, His243, Gln285, and Glu299 together coordinate ATP. The ATP-grasp 1 domain occupies 133–328 (RVAMGEIGLD…IAKVAAKLAV (196 aa)). Mg(2+)-binding residues include Gln285, Glu299, and Asn301. Residues Gln285, Glu299, and Asn301 each coordinate Mn(2+). The oligomerization domain stretch occupies residues 404–554 (TGKIGLDPTG…YSTYEDECEA (151 aa)). The carbamoyl phosphate synthetic domain stretch occupies residues 555–942 (LPTDRDKIMI…AFARAQEAGG (388 aa)). The ATP-grasp 2 domain maps to 679–876 (QQLVDKLGLK…LAKIAARCMA (198 aa)). Positions 715, 754, 756, 761, 787, 788, 789, 790, 830, and 847 each coordinate ATP. Mg(2+) is bound by residues Gln830, Glu847, and Asn849. Mn(2+) contacts are provided by Gln830, Glu847, and Asn849. Positions 943–1080 (IKAPPLGKAF…LQELHKELEA (138 aa)) constitute an MGS-like domain. The tract at residues 943 to 1080 (IKAPPLGKAF…LQELHKELEA (138 aa)) is allosteric domain.

It belongs to the CarB family. As to quaternary structure, composed of two chains; the small (or glutamine) chain promotes the hydrolysis of glutamine to ammonia, which is used by the large (or ammonia) chain to synthesize carbamoyl phosphate. Tetramer of heterodimers (alpha,beta)4. The cofactor is Mg(2+). Requires Mn(2+) as cofactor.

The catalysed reaction is hydrogencarbonate + L-glutamine + 2 ATP + H2O = carbamoyl phosphate + L-glutamate + 2 ADP + phosphate + 2 H(+). It catalyses the reaction hydrogencarbonate + NH4(+) + 2 ATP = carbamoyl phosphate + 2 ADP + phosphate + 2 H(+). Its pathway is amino-acid biosynthesis; L-arginine biosynthesis; carbamoyl phosphate from bicarbonate: step 1/1. The protein operates within pyrimidine metabolism; UMP biosynthesis via de novo pathway; (S)-dihydroorotate from bicarbonate: step 1/3. In terms of biological role, large subunit of the glutamine-dependent carbamoyl phosphate synthetase (CPSase). CPSase catalyzes the formation of carbamoyl phosphate from the ammonia moiety of glutamine, carbonate, and phosphate donated by ATP, constituting the first step of 2 biosynthetic pathways, one leading to arginine and/or urea and the other to pyrimidine nucleotides. The large subunit (synthetase) binds the substrates ammonia (free or transferred from glutamine from the small subunit), hydrogencarbonate and ATP and carries out an ATP-coupled ligase reaction, activating hydrogencarbonate by forming carboxy phosphate which reacts with ammonia to form carbamoyl phosphate. The chain is Carbamoyl phosphate synthase large chain from Xanthomonas axonopodis pv. citri (strain 306).